Reading from the N-terminus, the 2214-residue chain is Non-reducing polyketide synthase dpmpA (2214 aa).

The N-terminal acylcarrier protein transacylase domain (SAT) stretch occupies residues 75–178 (EWIRTGDSHV…LAVCAGAWKD (104 aa)). The Ketosynthase family 3 (KS3) domain maps to 372–784 (DESIAIVGAS…GNNTAMIVCQ (413 aa)). Residues Cys532, His667, and His707 each act as for beta-ketoacyl synthase activity in the active site. Residues 888–1184 (VFAGQTGHRP…AFLSARLGSP (297 aa)) are malonyl-CoA:ACP transacylase (MAT) domain. Residue Ser974 is the For acyl/malonyl transferase activity of the active site. An N-terminal hotdog fold region spans residues 1255–1389 (PQLVSVVRSS…GIIKSQEQDR (135 aa)). The region spanning 1255-1566 (PQLVSVVRSS…FSKVPVRSLQ (312 aa)) is the PKS/mFAS DH domain. Positions 1265 to 1560 (GGADPEAAEF…AILGARFSKV (296 aa)) are product template (PT) domain. Residues 1416 to 1566 (GASVVQGAFV…FSKVPVRSLQ (151 aa)) are C-terminal hotdog fold. 2 Carrier domains span residues 1620-1695 (NEVK…HSRL) and 1722-1802 (KAST…SGAD). Position 1654 is an O-(pantetheine 4'-phosphoryl)serine (Ser1654). Positions 1698–1728 (VPQLSPHDTDRSSDLSAGQPPSTPKASTQEQ) are disordered. Residues 1711-1726 (DLSAGQPPSTPKASTQ) show a composition bias toward polar residues. Residue Ser1762 is modified to O-(pantetheine 4'-phosphoryl)serine. The segment at 1805 to 1827 (GFPRTSDNRRSEEGSVGHVGPEK) is disordered. Over residues 1810 to 1827 (SDNRRSEEGSVGHVGPEK) the composition is skewed to basic and acidic residues. Residues 1958 to 2210 (FPAYRPDHRL…SREADLFRWI (253 aa)) are methyltransferase (CMeT) domain.

It functions in the pathway secondary metabolite biosynthesis; terpenoid biosynthesis. Its function is as follows. Non-reducing polyketide synthase; part of the gene cluster that mediates the biosynthesis of diterpenoid pyrones. The first step of the pathway is the synthesis of the alpha-pyrone moiety by the polyketide synthase dpmpA via condensation of one acetyl-CoA starter unit with 3 malonyl-CoA units and 2 methylations. The alpha-pyrone is then combined with geranylgeranyl pyrophosphate (GGPP) formed by the GGPP synthase dpmpD through the action of the prenyltransferase dpmpC to yield a linear alpha-pyrone diterpenoid. Subsequent steps in the diterpenoid pyrone biosynthetic pathway involve the decalin core formation, which is initiated by the epoxidation of the C10-C11 olefin by the FAD-dependent oxidoreductase dpmpE, and is followed by a cyclization cascade catalyzed by the terpene cyclase dpmpB. The short chain dehydrogenase/reductase dpmpG then oxidizes the 8S hydroxy group to a ketone and the short chain dehydrogenase/reductase dpmpH reduces the ketone to the 8R hydroxy group to yield higginsianin B. Higginsianin B is further methylated by the methyltransferase dpmpI to produce the intermediate named FDDP B. The cytochrome P450 monooxygenase dpmpJ then oxidizes the C-26 methyl to primary alcohol, producing the final diterpenoid pyrone with a C-26 primary alcohol on the gamma-pyrone moiety named FDDP C. The chain is Non-reducing polyketide synthase dpmpA from Macrophomina phaseolina (strain MS6) (Charcoal rot fungus).